Consider the following 316-residue polypeptide: Acetyl-coenzyme A carboxylase carboxyl transferase subunit beta (316 aa).

The CoA carboxyltransferase N-terminal domain occupies 29–298 (LWTKCPNCGV…LLSPLNSHHH (270 aa)). 4 residues coordinate Zn(2+): C33, C36, C52, and C55. Residues 33 to 55 (CPNCGVLAYTKDLLANQLVCLDC) form a C4-type zinc finger.

It belongs to the AccD/PCCB family. In terms of assembly, acetyl-CoA carboxylase is a heterohexamer composed of biotin carboxyl carrier protein (AccB), biotin carboxylase (AccC) and two subunits each of ACCase subunit alpha (AccA) and ACCase subunit beta (AccD). It depends on Zn(2+) as a cofactor.

It localises to the cytoplasm. It catalyses the reaction N(6)-carboxybiotinyl-L-lysyl-[protein] + acetyl-CoA = N(6)-biotinyl-L-lysyl-[protein] + malonyl-CoA. It functions in the pathway lipid metabolism; malonyl-CoA biosynthesis; malonyl-CoA from acetyl-CoA: step 1/1. Functionally, component of the acetyl coenzyme A carboxylase (ACC) complex. Biotin carboxylase (BC) catalyzes the carboxylation of biotin on its carrier protein (BCCP) and then the CO(2) group is transferred by the transcarboxylase to acetyl-CoA to form malonyl-CoA. The protein is Acetyl-coenzyme A carboxylase carboxyl transferase subunit beta of Microcystis aeruginosa (strain NIES-843 / IAM M-2473).